Consider the following 283-residue polypeptide: Gap junction beta-1 protein (283 aa).

Over 1 to 22 (MNWTGLYTLLSGVNRHSTAIGR) the chain is Cytoplasmic. Residues 23-45 (VWLSVIFIFRIMVLVVAAESVWG) traverse the membrane as a helical segment. Over 46–75 (DEKSSFICNTLQPGCNSVCYDHFFPISHVR) the chain is Extracellular. Residues 76 to 95 (LWSLQLILVSTPALLVAMHV) traverse the membrane as a helical segment. The Cytoplasmic segment spans residues 96–130 (AHQQHIEKKMLRLEGHGDPLHLEEVKRHKVHISGT). A helical membrane pass occupies residues 131-153 (LWWTYVISVVFRLLFEAVFMYVF). Residues 154-191 (YLLYPGYAMVRLVKCEAFPCPNTVDCFVSRPTEKTVFT) are Extracellular-facing. The chain crosses the membrane as a helical span at residues 192 to 214 (VFMLAASGICIILNVAEVVYLII). Residues 215–283 (RACARRAQRR…AEKSDRCSAC (69 aa)) are Cytoplasmic-facing. Phosphoserine occurs at positions 233, 258, 266, and 277.

It belongs to the connexin family. Beta-type (group I) subfamily. In terms of assembly, a connexon is composed of a hexamer of connexins. Interacts with CNST.

It localises to the cell membrane. Its subcellular location is the cell junction. The protein resides in the gap junction. One gap junction consists of a cluster of closely packed pairs of transmembrane channels, the connexons, through which materials of low MW diffuse from one cell to a neighboring cell. The chain is Gap junction beta-1 protein (Gjb1) from Mus musculus (Mouse).